The following is a 396-amino-acid chain: Probable sugar efflux transporter (396 aa).

The next 12 helical transmembrane spans lie at 15–35 (VVTLAVAAFIFNTTEFVPVGL), 50–70 (VGIMLTIYAWVVALMSLPFML), 81–101 (LICLFVVFIASHVLSFLSWSF), 103–123 (VLVISRIGVAFAHAIFWSITA), 136–156 (AQALSLIATGTALAMVLGLPL), 170–190 (FFAIGIGALITLLCLIKLLPL), 209–229 (PALMSIYLLTVVVVTAHYTAY), 246–266 (FATALLLLLGGAGIIGSVIFG), 275–295 (ALVSTAIALLLVCLALLLPAA), 299–319 (IHLGVLSIFWGIAMMLIGLGM), 333–353 (VAMALFSGIFNIGIGAGALVG), and 364–384 (MIGYVGAVPAFAALIWSIIIF).

It belongs to the major facilitator superfamily. SotB (TC 2.A.1.2) family.

The protein localises to the cell inner membrane. Functionally, involved in the efflux of sugars. The physiological role may be the reduction of the intracellular concentration of toxic sugars or sugar metabolites. In Shigella boydii serotype 18 (strain CDC 3083-94 / BS512), this protein is Probable sugar efflux transporter.